A 106-amino-acid chain; its full sequence is Large ribosomal subunit protein bL21 (106 aa).

The protein belongs to the bacterial ribosomal protein bL21 family. Part of the 50S ribosomal subunit. Contacts protein L20.

Functionally, this protein binds to 23S rRNA in the presence of protein L20. This is Large ribosomal subunit protein bL21 from Chlamydia felis (strain Fe/C-56) (Chlamydophila felis).